Consider the following 119-residue polypeptide: Small ribosomal subunit protein bS6 (119 aa).

Belongs to the bacterial ribosomal protein bS6 family.

Functionally, binds together with bS18 to 16S ribosomal RNA. The sequence is that of Small ribosomal subunit protein bS6 from Buchnera aphidicola subsp. Baizongia pistaciae (strain Bp).